Here is a 96-residue protein sequence, read N- to C-terminus: Co-chaperonin GroES (96 aa).

Belongs to the GroES chaperonin family. As to quaternary structure, heptamer of 7 subunits arranged in a ring. Interacts with the chaperonin GroEL.

It localises to the cytoplasm. Together with the chaperonin GroEL, plays an essential role in assisting protein folding. The GroEL-GroES system forms a nano-cage that allows encapsulation of the non-native substrate proteins and provides a physical environment optimized to promote and accelerate protein folding. GroES binds to the apical surface of the GroEL ring, thereby capping the opening of the GroEL channel. The polypeptide is Co-chaperonin GroES (Acinetobacter baumannii (strain AB307-0294)).